Here is a 285-residue protein sequence, read N- to C-terminus: Mitochondrial substrate carrier family protein L (285 aa).

Topologically, residues 1–13 (MIASKETKEKIRN) are mitochondrial intermembrane. Solcar repeat units follow at residues 8–94 (KEKI…VKSK), 103–185 (ISLG…AQRY), and 193–282 (MTMG…VMKF). A helical transmembrane segment spans residues 14–34 (FIGGFASGAASTLAGHPFDTL). Residues 35–69 (KVRLQTEGSTGRFRGLAHCFTTTIKEEGFFALYKG) lie on the Mitochondrial matrix side of the membrane. A helical transmembrane segment spans residues 70 to 90 (VTPPLLGMSIINSCMFGAMNI). The Mitochondrial intermembrane segment spans residues 91 to 102 (VKSKIHTDKSTP). A helical membrane pass occupies residues 103 to 123 (ISLGEIMVSGAITGWIVSFVA). Residues 124–156 (CPIETVKSKLQVQYTGVKLYNGPIDCIKKIGIR) lie on the Mitochondrial matrix side of the membrane. A helical transmembrane segment spans residues 157-177 (GLYKALIPTGFQRNSLYAYFG). Residues 178–198 (CYELAQRYLRREDGSMTMGRS) lie on the Mitochondrial intermembrane side of the membrane. A helical membrane pass occupies residues 199 to 219 (FIAGGIAGTGFWLTNFPFDVI). The Mitochondrial matrix portion of the chain corresponds to 220–256 (RSRIMTMPYNESPPRYKGMIDCAKHIYRVDGLKGFWK). A helical transmembrane segment spans residues 257 to 277 (GFSPCLLRTFPANGATFVAYE). Topologically, residues 278 to 285 (CVMKFFPM) are mitochondrial intermembrane.

It belongs to the mitochondrial carrier (TC 2.A.29) family.

Its subcellular location is the mitochondrion inner membrane. Mitochondrial solute carriers shuttle metabolites, nucleotides, and cofactors through the mitochondrial inner membrane. The sequence is that of Mitochondrial substrate carrier family protein L (mcfL) from Dictyostelium discoideum (Social amoeba).